The following is a 199-amino-acid chain: Imidazoleglycerol-phosphate dehydratase (199 aa).

It belongs to the imidazoleglycerol-phosphate dehydratase family.

It is found in the cytoplasm. The catalysed reaction is D-erythro-1-(imidazol-4-yl)glycerol 3-phosphate = 3-(imidazol-4-yl)-2-oxopropyl phosphate + H2O. Its pathway is amino-acid biosynthesis; L-histidine biosynthesis; L-histidine from 5-phospho-alpha-D-ribose 1-diphosphate: step 6/9. The protein is Imidazoleglycerol-phosphate dehydratase of Kineococcus radiotolerans (strain ATCC BAA-149 / DSM 14245 / SRS30216).